The sequence spans 449 residues: uncharacterized protein (449 aa).

Residues 1–11 are compositionally biased toward acidic residues; the sequence is MLDAPEQDPVD. A disordered region spans residues 1–33; it reads MLDAPEQDPVDPGDPASPPHGEAEQPLPGPRWP. Residues 45 to 65 form a helical membrane-spanning segment; the sequence is LLLTALGGLLIAGLVTAIPAV. The disordered stretch occupies residues 349-449; the sequence is QPPVPPPDIP…PGPAEPAPAG (101 aa). Pro residues predominate over residues 365-387; the sequence is PPIPLQLPTPRPAPPAQQLPSTP. Positions 409 to 418 are enriched in low complexity; sequence HAPASAAPAE. Pro residues predominate over residues 437 to 449; that stretch reads ATPPGPAEPAPAG.

It localises to the cell membrane. It is found in the secreted. Functionally, may play a role in septum formation. This is an uncharacterized protein from Mycobacterium tuberculosis (strain CDC 1551 / Oshkosh).